A 732-amino-acid chain; its full sequence is MGKREEMIKEIKELMLQPERIRNMGIAAHIDHGKTTLSDNLLAGAGMISEELAGKQLVLDFDEQEQARGITINAANVSMIHEYGDQKYLVNLIDTPGHVDFGGDVTRAMRAIDGAIIVVDAVEGVMPQTETVLRQALREYVKPVLFINKVDRLIKELKLNPQQMQERFVRVITDVNRLIRKYAPAEFKNKWLVNVNDGSVAFGSAYYNWALSVPYMKKTGVSFKDIIDLTNAGDLKTLRKKAPLHVVVLDMVVRHLPNPVEAQKYRIPHLWRGEIESEIGQSMASCNPKGKMVMVVTKIIIDKHAGEVATGRVWSGTVKTGQEVHIITAKRKARIQQVGIYMGPERINMEAVPAGNIVAVTGLRDAMAGETVAEEPIEPFEALHYTSEPVVTVAIEAKNVKDLPRLIEALRQLAKEDPTLHVKIDEETGQHLLSGMGELHLEVKLVHLKEQWGVDVDVSEPIVVYRESITKQSPIVEGKSPNKHNRFYIVVEPMPDEIYQAIREGEIPEGRPKDTKVVAKKLAELGMDYEIARGIVDIYNGNMFLDNTKGLQYLNEVMDLLVDGFHQAMDEGPLAREPVMKVIVRLVDAKIHEDNVHRGPAQIYPAIRTAIHCAMMKSNPVLYEPYQKVVINVPYEYMGSVSREMNQRRGQLIDMRQEGEVMIIISEAPVAEMFGFAGAIRGATSGRALWSTEHAGFKRVPTELAINIIRQIRQRKGLNPNPPTEKDICPQQ.

The 212-residue stretch at 19–230 (ERIRNMGIAA…VSFKDIIDLT (212 aa)) folds into the tr-type G domain. Residues 28–35 (AHIDHGKT), 94–98 (DTPGH), and 148–151 (NKVD) contribute to the GTP site. His-597 is subject to Diphthamide.

It belongs to the TRAFAC class translation factor GTPase superfamily. Classic translation factor GTPase family. EF-G/EF-2 subfamily.

Its subcellular location is the cytoplasm. Functionally, catalyzes the GTP-dependent ribosomal translocation step during translation elongation. During this step, the ribosome changes from the pre-translocational (PRE) to the post-translocational (POST) state as the newly formed A-site-bound peptidyl-tRNA and P-site-bound deacylated tRNA move to the P and E sites, respectively. Catalyzes the coordinated movement of the two tRNA molecules, the mRNA and conformational changes in the ribosome. This Thermococcus sibiricus (strain DSM 12597 / MM 739) protein is Elongation factor 2.